Here is a 205-residue protein sequence, read N- to C-terminus: N-(5'-phosphoribosyl)anthranilate isomerase (205 aa).

This sequence belongs to the TrpF family.

The catalysed reaction is N-(5-phospho-beta-D-ribosyl)anthranilate = 1-(2-carboxyphenylamino)-1-deoxy-D-ribulose 5-phosphate. It participates in amino-acid biosynthesis; L-tryptophan biosynthesis; L-tryptophan from chorismate: step 3/5. This chain is N-(5'-phosphoribosyl)anthranilate isomerase, found in Maridesulfovibrio salexigens (strain ATCC 14822 / DSM 2638 / NCIMB 8403 / VKM B-1763) (Desulfovibrio salexigens).